Reading from the N-terminus, the 391-residue chain is Phosphoprotein (391 aa).

The tract at residues 1-194 (MDQFIKQDET…GSLSGATLYA (194 aa)) is N-terminus domain. Residues T10, T16, T91, T150, and T165 each carry the phosphothreonine modification. At S188 the chain carries Phosphoserine. The tract at residues 216–279 (ISANEIMDLL…MATVKIMDPG (64 aa)) is multimerization. Residues 218–245 (ANEIMDLLRGMDARLQHLEQKVDKVLAQ) are a coiled coil. T250 is modified (phosphothreonine). Phosphoserine is present on S257. 2 positions are modified to phosphothreonine: T258 and T282. Residues S292 and S294 each carry the phosphoserine modification. Position 298 is a phosphothreonine (T298). A phosphoserine mark is found at S301 and S374. The interaction with the nucleoprotein stretch occupies residues 343–391 (AGQKVMITKMITDCVANPQMKQAFEQRLAKASTEDALNDIKRDIIRSAI). The residue at position 375 (T375) is a Phosphothreonine.

Belongs to the rubulavirus/avulavirus P protein family. In terms of assembly, homotetramer. Interacts (via multimerization domain) with polymerase L; this interaction forms the polymerase L-P complex. Interacts (via N-terminus) with N0 (via Ncore); this interaction allows P to chaperon N0 to avoid N polymerization before encapsidation. Interacts (via C-terminus) with N-RNA template; this interaction positions the polymerase on the template for both transcription and replication. Interacts with host RPS6KB1 kinase; this interaction may play a role in the viral replication and transcription.

It localises to the virion. In terms of biological role, essential cofactor of the RNA polymerase L that plays a central role in the transcription and replication by forming the polymerase complex with RNA polymerase L and recruiting L to the genomic N-RNA template for RNA synthesis. Also plays a central role in the encapsidation of nascent RNA chains by forming the encapsidation complex with the nucleocapsid protein N (N-P complex). Acts as a chaperone for newly synthesized free N protein, so-called N0, allowing encapsidation of nascent RNA chains during replication. The nucleoprotein protein N prevents excessive phosphorylation of P, which leads to down-regulation of viral transcription/ replication. Participates, together with N, in the formation of viral factories (viroplasms), which are large inclusions in the host cytoplasm where replication takes place. The chain is Phosphoprotein from Homo sapiens (Human).